A 593-amino-acid polypeptide reads, in one-letter code: Brain-enriched guanylate kinase-associated protein (593 aa).

An N-acetylmethionine modification is found at methionine 1. The residue at position 137 (tyrosine 137) is a Phosphotyrosine. 6 positions are modified to phosphoserine: serine 200, serine 229, serine 246, serine 265, serine 346, and serine 373. At arginine 381 the chain carries Asymmetric dimethylarginine. 9 positions are modified to phosphoserine: serine 455, serine 465, serine 475, serine 477, serine 500, serine 502, serine 506, serine 553, and serine 563. The segment at 499 to 593 is disordered; it reads LSLSPGRSAD…KAQLYGTLLN (95 aa).

As to quaternary structure, interacts with DLG4 and DLGAP1 and forms a ternary complex.

Its subcellular location is the cytoplasm. It localises to the membrane. In terms of biological role, may sustain the structure of the postsynaptic density (PSD). This Homo sapiens (Human) protein is Brain-enriched guanylate kinase-associated protein (BEGAIN).